Reading from the N-terminus, the 262-residue chain is uncharacterized protein (262 aa).

This sequence belongs to the BtpA family.

This is an uncharacterized protein from Pyrococcus furiosus (strain ATCC 43587 / DSM 3638 / JCM 8422 / Vc1).